Consider the following 562-residue polypeptide: Serine palmitoyltransferase 2 (562 aa).

The chain crosses the membrane as a helical span at residues 61 to 81 (LITYLNYLILIILGHIHDFLG). Lysine 365 carries the post-translational modification N6-(pyridoxal phosphate)lysine.

It belongs to the class-II pyridoxal-phosphate-dependent aminotransferase family. Pyridoxal 5'-phosphate is required as a cofactor.

The protein resides in the membrane. It carries out the reaction L-serine + hexadecanoyl-CoA + H(+) = 3-oxosphinganine + CO2 + CoA. It functions in the pathway lipid metabolism; sphingolipid metabolism. In Kluyveromyces lactis (strain ATCC 8585 / CBS 2359 / DSM 70799 / NBRC 1267 / NRRL Y-1140 / WM37) (Yeast), this protein is Serine palmitoyltransferase 2 (LCB2).